A 351-amino-acid polypeptide reads, in one-letter code: Histidinol-phosphate aminotransferase (351 aa).

Lys-213 bears the N6-(pyridoxal phosphate)lysine mark.

The protein belongs to the class-II pyridoxal-phosphate-dependent aminotransferase family. Histidinol-phosphate aminotransferase subfamily. In terms of assembly, homodimer. Requires pyridoxal 5'-phosphate as cofactor.

The enzyme catalyses L-histidinol phosphate + 2-oxoglutarate = 3-(imidazol-4-yl)-2-oxopropyl phosphate + L-glutamate. It functions in the pathway amino-acid biosynthesis; L-histidine biosynthesis; L-histidine from 5-phospho-alpha-D-ribose 1-diphosphate: step 7/9. The chain is Histidinol-phosphate aminotransferase from Clostridium kluyveri (strain NBRC 12016).